The chain runs to 419 residues: Multifunctional CCA protein (419 aa).

The ATP site is built by glycine 8 and arginine 11. CTP-binding residues include glycine 8 and arginine 11. Positions 21 and 23 each coordinate Mg(2+). 3 residues coordinate ATP: arginine 91, arginine 137, and arginine 140. The CTP site is built by arginine 91, arginine 137, and arginine 140. In terms of domain architecture, HD spans 228-334 (SFLHTMLVLQ…IKLFNKLDVW (107 aa)).

Belongs to the tRNA nucleotidyltransferase/poly(A) polymerase family. Bacterial CCA-adding enzyme type 1 subfamily. In terms of assembly, monomer. Can also form homodimers and oligomers. It depends on Mg(2+) as a cofactor. Ni(2+) is required as a cofactor.

It carries out the reaction a tRNA precursor + 2 CTP + ATP = a tRNA with a 3' CCA end + 3 diphosphate. It catalyses the reaction a tRNA with a 3' CCA end + 2 CTP + ATP = a tRNA with a 3' CCACCA end + 3 diphosphate. Functionally, catalyzes the addition and repair of the essential 3'-terminal CCA sequence in tRNAs without using a nucleic acid template. Adds these three nucleotides in the order of C, C, and A to the tRNA nucleotide-73, using CTP and ATP as substrates and producing inorganic pyrophosphate. tRNA 3'-terminal CCA addition is required both for tRNA processing and repair. Also involved in tRNA surveillance by mediating tandem CCA addition to generate a CCACCA at the 3' terminus of unstable tRNAs. While stable tRNAs receive only 3'-terminal CCA, unstable tRNAs are marked with CCACCA and rapidly degraded. The sequence is that of Multifunctional CCA protein from Mannheimia succiniciproducens (strain KCTC 0769BP / MBEL55E).